Reading from the N-terminus, the 204-residue chain is MIRFVLDTSIFVNPDVRKKFGETPTKAMKTFLKYAESLFGHVEFYMPPGIYREVMHFVEEEEVSPDIELYIIKKPPNVHDIKIPAFVVYELIEDIRRRVDKGLRVAEKAVRESVIDTSNVDKIIQKLRRNYRKALREGILDSKEDFELILLAKELDGIIVSADVGILTWAEKMGIKWVDAFKFKEVLEELVEKLKRSESEKERK.

This sequence belongs to the HARP family.

It catalyses the reaction Endonucleolytic cleavage of RNA, removing 5'-extranucleotides from tRNA precursor.. RNA-free RNase P that catalyzes the removal of the 5'-leader sequence from pre-tRNA to produce the mature 5'-terminus. In Pyrococcus abyssi (strain GE5 / Orsay), this protein is RNA-free ribonuclease P.